Here is a 1031-residue protein sequence, read N- to C-terminus: Ookinete maturation protein 1 (1031 aa).

3 disordered regions span residues 125-184 (HNEN…PELE), 340-405 (KEAE…DGMR), and 609-697 (DAEL…NDSI). A compositionally biased stretch (basic residues) spans 141-168 (QKLKKKKKIKKGTKKKSINKISILKHKS). A compositionally biased stretch (polar residues) spans 171 to 180 (SFPSTQNENT). Basic and acidic residues predominate over residues 340-357 (KEAEEEERKKNEDEHILE). The segment covering 377–394 (LGKSFKNNESFELNSPQK) has biased composition (polar residues). The stretch at 581 to 646 (IDEENSVFVE…ETQMAGKEEK (66 aa)) forms a coiled coil. The segment covering 610 to 648 (AELRKDEEEDKSKNNEKDSKSEERDILETQMAGKEEKPV) has biased composition (basic and acidic residues). Positions 649–659 (LKKKKKNKGKQ) are enriched in basic residues. Over residues 660–686 (RNREGKGVVEKGYDAKREKKENEEKNK) the composition is skewed to basic and acidic residues.

Its function is as follows. In the mosquito vector midgut, plays a role in ookinete development. This Plasmodium berghei (strain Anka) protein is Ookinete maturation protein 1.